The sequence spans 148 residues: Auxin-responsive protein SAUR65 (148 aa).

It belongs to the ARG7 family.

It localises to the cell membrane. Functionally, may promote auxin-stimulated organ elongation, such as hypocotyls, stamen filaments and petals. In Arabidopsis thaliana (Mouse-ear cress), this protein is Auxin-responsive protein SAUR65.